Here is a 388-residue protein sequence, read N- to C-terminus: Autophagy-related protein 21 (388 aa).

WD repeat units follow at residues 179-219 (CHRS…KVHE) and 224-263 (SYTA…RRRS). The L/FRRG motif signature appears at 220 to 224 (FRRGS).

Belongs to the WD repeat PROPPIN family.

The protein resides in the cytoplasm. It is found in the membrane. It localises to the vacuole membrane. In terms of biological role, involved in peroxisome sequestration to the vacuole during macropexophagy. Also required for microautophagy. The polypeptide is Autophagy-related protein 21 (ATG21) (Pichia angusta (Yeast)).